The primary structure comprises 346 residues: GTPase Obg (346 aa).

The Obg domain occupies 1–159 (MQFVDEANIR…RNLGLELSVL (159 aa)). A disordered region spans residues 127-149 (NVHFKSSTNRTPRQCTPGEPGDE). The segment covering 130–140 (FKSSTNRTPRQ) has biased composition (polar residues). The region spanning 160-333 (ADVGLLGMPN…LVKEVAYGLE (174 aa)) is the OBG-type G domain. GTP-binding positions include 166 to 173 (GMPNAGKS), 191 to 195 (FTTLY), 213 to 216 (DIPG), 283 to 286 (NKTD), and 314 to 316 (SAV). Residues Ser173 and Thr193 each coordinate Mg(2+).

This sequence belongs to the TRAFAC class OBG-HflX-like GTPase superfamily. OBG GTPase family. In terms of assembly, monomer. The cofactor is Mg(2+).

The protein localises to the cytoplasm. Functionally, an essential GTPase which binds GTP, GDP and possibly (p)ppGpp with moderate affinity, with high nucleotide exchange rates and a fairly low GTP hydrolysis rate. Plays a role in control of the cell cycle, stress response, ribosome biogenesis and in those bacteria that undergo differentiation, in morphogenesis control. The polypeptide is GTPase Obg (Hydrogenovibrio crunogenus (strain DSM 25203 / XCL-2) (Thiomicrospira crunogena)).